The chain runs to 521 residues: Exoglucanase 1 (521 aa).

Residues 1 to 17 (MLAKFAALAALVASANA) form the signal peptide. The catalytic stretch occupies residues 18–450 (QAVCSLTAET…FGPIGSTFSG (433 aa)). A glycan (N-linked (GlcNAc...) asparagine) is linked at Asn-32. The active-site Nucleophile is the Glu-229. Glu-234 acts as the Proton donor in catalysis. An N-linked (GlcNAc...) asparagine glycan is attached at Asn-287. The interval 447 to 486 (TFSGGSSGTPPSNPSSSVKPVTSTAKPSSTSTASNPSGTG) is disordered. The linker stretch occupies residues 451-485 (GSSGTPPSNPSSSVKPVTSTAKPSSTSTASNPSGT). One can recognise a CBM1 domain in the interval 485-521 (TGAAHWAQCGGIGFSGPTTCQSPYTCQKINDYYSQCV). 2 disulfides stabilise this stretch: Cys-493–Cys-510 and Cys-504–Cys-520.

This sequence belongs to the glycosyl hydrolase 7 (cellulase C) family.

Its subcellular location is the secreted. It carries out the reaction Hydrolysis of (1-&gt;4)-beta-D-glucosidic linkages in cellulose and cellotetraose, releasing cellobiose from the non-reducing ends of the chains.. The sequence is that of Exoglucanase 1 (cbh-1) from Neurospora crassa (strain ATCC 24698 / 74-OR23-1A / CBS 708.71 / DSM 1257 / FGSC 987).